We begin with the raw amino-acid sequence, 397 residues long: uncharacterized protein (397 aa).

This is an uncharacterized protein from Thermotoga maritima (strain ATCC 43589 / DSM 3109 / JCM 10099 / NBRC 100826 / MSB8).